The chain runs to 149 residues: 3-hydroxyacyl-[acyl-carrier-protein] dehydratase FabZ (149 aa).

Histidine 49 is an active-site residue.

It belongs to the thioester dehydratase family. FabZ subfamily.

The protein localises to the cytoplasm. It carries out the reaction a (3R)-hydroxyacyl-[ACP] = a (2E)-enoyl-[ACP] + H2O. Involved in unsaturated fatty acids biosynthesis. Catalyzes the dehydration of short chain beta-hydroxyacyl-ACPs and long chain saturated and unsaturated beta-hydroxyacyl-ACPs. In Sulfurovum sp. (strain NBC37-1), this protein is 3-hydroxyacyl-[acyl-carrier-protein] dehydratase FabZ.